The chain runs to 181 residues: MMQPLYLVGPRGCGKTTIGMALAQATGFRFADTDRWLQSHVQMSVADIVEKEGWGGFRARETAALEAVSAPSTVVATGGGIILTEYNRRYMHRVGVVIYLCAPVSTLVNRLEAEPEAELRPTLTGKPLSEEVREVLEQRDALYRETAHYIIDATKTPAQVVSEIIAALPPSTQRLQGDVYT.

Gly12 to Thr17 provides a ligand contact to ATP. Mg(2+) contacts are provided by Thr16 and Asp32. Asp34, Arg58, and Gly79 together coordinate substrate. The tract at residues Glu112 to Lys126 is LID domain. Arg120 is an ATP binding site. Arg139 contacts substrate.

This sequence belongs to the shikimate kinase family. AroL subfamily. Monomer. It depends on Mg(2+) as a cofactor.

The protein localises to the cytoplasm. The catalysed reaction is shikimate + ATP = 3-phosphoshikimate + ADP + H(+). It participates in metabolic intermediate biosynthesis; chorismate biosynthesis; chorismate from D-erythrose 4-phosphate and phosphoenolpyruvate: step 5/7. In terms of biological role, catalyzes the specific phosphorylation of the 3-hydroxyl group of shikimic acid using ATP as a cosubstrate. The polypeptide is Shikimate kinase 2 (Salmonella schwarzengrund (strain CVM19633)).